A 108-amino-acid polypeptide reads, in one-letter code: uncharacterized protein (108 aa).

Residues 48–73 (NSNIPSSSSSSPSFASFFSSTSTSAT) are compositionally biased toward low complexity. The segment at 48–81 (NSNIPSSSSSSPSFASFFSSTSTSATLNGSSNNK) is disordered.

This is an uncharacterized protein from Dictyostelium discoideum (Social amoeba).